A 610-amino-acid polypeptide reads, in one-letter code: ESX-5 secretion system protein EccA5 (610 aa).

Position 357–364 (357–364 (GPPGTGKT)) interacts with ATP.

Belongs to the CbxX/CfxQ family. As to quaternary structure, part of the ESX-5 / type VII secretion system (T7SS), which is composed of cytosolic and membrane components.

It is found in the cytoplasm. Functionally, part of the ESX-5 specialized secretion system, which is responsible for the secretion of EsxN and a number of PE_PGRS and PPE proteins. EccA5 exhibits ATPase activity and may provide energy for the export of ESX-5 substrates. In Mycobacterium marinum (strain ATCC BAA-535 / M), this protein is ESX-5 secretion system protein EccA5.